Consider the following 439-residue polypeptide: Ribosomal protein uS12 methylthiotransferase RimO (439 aa).

Residues 7–119 enclose the MTTase N-terminal domain; it reads KQLCLISLGC…IDIMIAKKQN (113 aa). [4Fe-4S] cluster contacts are provided by cysteine 16, cysteine 50, cysteine 82, cysteine 151, cysteine 155, and cysteine 158. The 229-residue stretch at 137-365 folds into the Radical SAM core domain; that stretch reads TGSSVHAYVK…NKIALKHQNN (229 aa).

Belongs to the methylthiotransferase family. RimO subfamily. Requires [4Fe-4S] cluster as cofactor.

It is found in the cytoplasm. It catalyses the reaction L-aspartate(89)-[ribosomal protein uS12]-hydrogen + (sulfur carrier)-SH + AH2 + 2 S-adenosyl-L-methionine = 3-methylsulfanyl-L-aspartate(89)-[ribosomal protein uS12]-hydrogen + (sulfur carrier)-H + 5'-deoxyadenosine + L-methionine + A + S-adenosyl-L-homocysteine + 2 H(+). In terms of biological role, catalyzes the methylthiolation of an aspartic acid residue of ribosomal protein uS12. The protein is Ribosomal protein uS12 methylthiotransferase RimO of Helicobacter pylori (strain Shi470).